The chain runs to 122 residues: Large ribosomal subunit protein uL18 (122 aa).

Belongs to the universal ribosomal protein uL18 family. Part of the 50S ribosomal subunit; part of the 5S rRNA/L5/L18/L25 subcomplex. Contacts the 5S and 23S rRNAs.

Functionally, this is one of the proteins that bind and probably mediate the attachment of the 5S RNA into the large ribosomal subunit, where it forms part of the central protuberance. This Desulfitobacterium hafniense (strain Y51) protein is Large ribosomal subunit protein uL18.